Consider the following 546-residue polypeptide: G1/S-specific cyclin CLN1 (546 aa).

A disordered region spans residues 224 to 265 (SNGKEWSCKRKSQSSDDSDATVEEHISSSPQSTGLDGDTTTM).

The protein belongs to the cyclin family.

Its function is as follows. Essential for the control of the cell cycle at the G1/S (start) transition. Interacts with the CDC28 protein kinase to form MPF. The sequence is that of G1/S-specific cyclin CLN1 (CLN1) from Saccharomyces cerevisiae (strain ATCC 204508 / S288c) (Baker's yeast).